The following is a 312-amino-acid chain: Ribosomal RNA small subunit methyltransferase H (312 aa).

S-adenosyl-L-methionine-binding positions include 35–37 (GGH), aspartate 55, phenylalanine 79, aspartate 101, and glutamine 108.

It belongs to the methyltransferase superfamily. RsmH family.

Its subcellular location is the cytoplasm. The catalysed reaction is cytidine(1402) in 16S rRNA + S-adenosyl-L-methionine = N(4)-methylcytidine(1402) in 16S rRNA + S-adenosyl-L-homocysteine + H(+). Specifically methylates the N4 position of cytidine in position 1402 (C1402) of 16S rRNA. The protein is Ribosomal RNA small subunit methyltransferase H of Buchnera aphidicola subsp. Acyrthosiphon pisum (strain APS) (Acyrthosiphon pisum symbiotic bacterium).